A 369-amino-acid polypeptide reads, in one-letter code: Flagellar P-ring protein (369 aa).

Positions 1–23 (MIKQFAVSLLLVLLTLVTTTASA) are cleaved as a signal peptide.

Belongs to the FlgI family. In terms of assembly, the basal body constitutes a major portion of the flagellar organelle and consists of four rings (L,P,S, and M) mounted on a central rod.

It is found in the periplasm. Its subcellular location is the bacterial flagellum basal body. Its function is as follows. Assembles around the rod to form the L-ring and probably protects the motor/basal body from shearing forces during rotation. The chain is Flagellar P-ring protein from Photorhabdus laumondii subsp. laumondii (strain DSM 15139 / CIP 105565 / TT01) (Photorhabdus luminescens subsp. laumondii).